A 1275-amino-acid polypeptide reads, in one-letter code: Mediator of RNA polymerase II transcription subunit 33B (1275 aa).

Over residues 772–791 (GSQSLTPSSGSSSLSTSGGD) the composition is skewed to low complexity. Residues 772–792 (GSQSLTPSSGSSSLSTSGGDD) are disordered.

Belongs to the Mediator complex subunit 33 family. In terms of assembly, component of the Mediator complex. In terms of tissue distribution, ubiquitous.

The protein resides in the nucleus. In terms of biological role, component of the Mediator complex, a coactivator involved in the regulated transcription of nearly all RNA polymerase II-dependent genes. Mediator functions as a bridge to convey information from gene-specific regulatory proteins to the basal RNA polymerase II transcription machinery. The Mediator complex, having a compact conformation in its free form, is recruited to promoters by direct interactions with regulatory proteins and serves for the assembly of a functional preinitiation complex with RNA polymerase II and the general transcription factors. Involved in the repression of phenylpropanoid biosynthesis. May compete with MED33B for common binding partners or for occupancy in Mediator. The protein is Mediator of RNA polymerase II transcription subunit 33B (MED33B) of Arabidopsis thaliana (Mouse-ear cress).